A 626-amino-acid polypeptide reads, in one-letter code: Ankyrin repeat domain-containing protein 13B (626 aa).

N-acetylmethionine is present on methionine 1. 2 ANK repeats span residues 47-76 and 80-109; these read RGRTPLHLATTLGHLECARVLLAHGADVGR and SGWTVLQEAVSTRDLELVQLVLRYRDYQRV. Residues 442–474 are disordered; it reads PVPSVRGSPSSETPSPGSDSSSVSSSSSTTSCR. Residues 449–472 show a composition bias toward low complexity; sequence SPSSETPSPGSDSSSVSSSSSTTS. The 20-residue stretch at 503 to 522 folds into the UIM 1 domain; the sequence is DDDDLLQFAIQQSLLEAGSE. 2 disordered regions span residues 534 to 590 and 595 to 614; these read NSKP…DEQL and ELSAQEQEERRRRARQEEEE. The span at 554–573 shows a compositional bias: pro residues; sequence PPTPQRQPAPPASVPSPRPS. UIM domains follow at residues 585–604 and 610–626; these read SYDEQLRLAMELSAQEQEER and QEEEELERILRLSLTEQ.

Interacts with EGFR (ubiquitinated); the interaction is direct and may regulate EGFR internalization.

It is found in the cell membrane. The protein resides in the late endosome. Its subcellular location is the early endosome. Its function is as follows. Ubiquitin-binding protein that specifically recognizes and binds 'Lys-63'-linked ubiquitin. Does not bind 'Lys-48'-linked ubiquitin. Positively regulates the internalization of ligand-activated EGFR by binding to the Ub moiety of ubiquitinated EGFR at the cell membrane. The polypeptide is Ankyrin repeat domain-containing protein 13B (ANKRD13B) (Homo sapiens (Human)).